An 805-amino-acid chain; its full sequence is Probable inorganic carbon transporter subunit DabA (805 aa).

Zn(2+) is bound by residues Cys-334, Asp-336, His-491, and Cys-506.

It belongs to the inorganic carbon transporter (TC 9.A.2) DabA family. In terms of assembly, forms a complex with DabB. Zn(2+) serves as cofactor.

It localises to the cell inner membrane. Part of an energy-coupled inorganic carbon pump. This Ruegeria sp. (strain TM1040) (Silicibacter sp.) protein is Probable inorganic carbon transporter subunit DabA.